The following is a 692-amino-acid chain: Elongation factor G (692 aa).

Positions glutamate 8 to serine 282 constitute a tr-type G domain. Residues alanine 17–threonine 24, aspartate 81–histidine 85, and asparagine 135–aspartate 138 each bind GTP.

This sequence belongs to the TRAFAC class translation factor GTPase superfamily. Classic translation factor GTPase family. EF-G/EF-2 subfamily.

Its subcellular location is the cytoplasm. In terms of biological role, catalyzes the GTP-dependent ribosomal translocation step during translation elongation. During this step, the ribosome changes from the pre-translocational (PRE) to the post-translocational (POST) state as the newly formed A-site-bound peptidyl-tRNA and P-site-bound deacylated tRNA move to the P and E sites, respectively. Catalyzes the coordinated movement of the two tRNA molecules, the mRNA and conformational changes in the ribosome. In Nostoc punctiforme (strain ATCC 29133 / PCC 73102), this protein is Elongation factor G.